A 163-amino-acid polypeptide reads, in one-letter code: NADH-quinone oxidoreductase subunit I (163 aa).

4Fe-4S ferredoxin-type domains follow at residues 54-84 (LRRY…IESE) and 94-123 (TRYD…ETRI). [4Fe-4S] cluster is bound by residues Cys-64, Cys-67, Cys-70, Cys-74, Cys-103, Cys-106, Cys-109, and Cys-113.

Belongs to the complex I 23 kDa subunit family. NDH-1 is composed of 14 different subunits. Subunits NuoA, H, J, K, L, M, N constitute the membrane sector of the complex. Requires [4Fe-4S] cluster as cofactor.

It is found in the cell inner membrane. It carries out the reaction a quinone + NADH + 5 H(+)(in) = a quinol + NAD(+) + 4 H(+)(out). Its function is as follows. NDH-1 shuttles electrons from NADH, via FMN and iron-sulfur (Fe-S) centers, to quinones in the respiratory chain. The immediate electron acceptor for the enzyme in this species is believed to be ubiquinone. Couples the redox reaction to proton translocation (for every two electrons transferred, four hydrogen ions are translocated across the cytoplasmic membrane), and thus conserves the redox energy in a proton gradient. This is NADH-quinone oxidoreductase subunit I from Methylobacillus flagellatus (strain ATCC 51484 / DSM 6875 / VKM B-1610 / KT).